A 339-amino-acid polypeptide reads, in one-letter code: RNA polymerase principal sigma factor HrdC (339 aa).

The segment covering 1–10 has biased composition (low complexity); that stretch reads MAPTARTPTA. 2 disordered regions span residues 1 to 37 and 71 to 101; these read MAPT…EEPD and REEL…DGQE. Positions 91–101 are enriched in basic and acidic residues; the sequence is TLEETVHDGQE. A Polymerase core binding motif is present at residues 130–143; that stretch reads DVIQEGNLGLIRAV. Positions 300–319 form a DNA-binding region, H-T-H motif; it reads LQQVAQHVGLTRERVRQLEK.

Belongs to the sigma-70 factor family. In terms of assembly, interacts transiently with the RNA polymerase catalytic core.

In terms of biological role, sigma factors are initiation factors that promote the attachment of RNA polymerase to specific initiation sites and are then released. The protein is RNA polymerase principal sigma factor HrdC (hrdC) of Streptomyces coelicolor (strain ATCC BAA-471 / A3(2) / M145).